We begin with the raw amino-acid sequence, 299 residues long: 4-hydroxy-tetrahydrodipicolinate synthase 2 (299 aa).

Threonine 54 is a binding site for pyruvate. Tyrosine 142 functions as the Proton donor/acceptor in the catalytic mechanism. The active-site Schiff-base intermediate with substrate is lysine 170. Pyruvate is bound at residue valine 210.

This sequence belongs to the DapA family. In terms of assembly, homotetramer; dimer of dimers.

The protein resides in the cytoplasm. The catalysed reaction is L-aspartate 4-semialdehyde + pyruvate = (2S,4S)-4-hydroxy-2,3,4,5-tetrahydrodipicolinate + H2O + H(+). The protein operates within amino-acid biosynthesis; L-lysine biosynthesis via DAP pathway; (S)-tetrahydrodipicolinate from L-aspartate: step 3/4. Functionally, catalyzes the condensation of (S)-aspartate-beta-semialdehyde [(S)-ASA] and pyruvate to 4-hydroxy-tetrahydrodipicolinate (HTPA). This Streptomyces coelicolor (strain ATCC BAA-471 / A3(2) / M145) protein is 4-hydroxy-tetrahydrodipicolinate synthase 2.